The chain runs to 325 residues: Large ribosomal subunit protein uL18 (325 aa).

The disordered stretch occupies residues 247-300; that stretch reads IRIPPSRRNPRRRSPRSGGRWPSCRSPPARRRSRSTRPTSWPRSRPTSKPKRPR. Low complexity-rich tracts occupy residues 262 to 273 and 282 to 291; these read RSGGRWPSCRSP and TRPTSWPRSR.

Belongs to the universal ribosomal protein uL18 family. Component of the large ribosomal subunit (LSU).

The protein resides in the cytoplasm. Its subcellular location is the nucleus. In terms of biological role, component of the ribosome, a large ribonucleoprotein complex responsible for the synthesis of proteins in the cell. The small ribosomal subunit (SSU) binds messenger RNAs (mRNAs) and translates the encoded message by selecting cognate aminoacyl-transfer RNA (tRNA) molecules. The large subunit (LSU) contains the ribosomal catalytic site termed the peptidyl transferase center (PTC), which catalyzes the formation of peptide bonds, thereby polymerizing the amino acids delivered by tRNAs into a polypeptide chain. The nascent polypeptides leave the ribosome through a tunnel in the LSU and interact with protein factors that function in enzymatic processing, targeting, and the membrane insertion of nascent chains at the exit of the ribosomal tunnel. In Anopheles gambiae (African malaria mosquito), this protein is Large ribosomal subunit protein uL18 (RpL5).